A 931-amino-acid chain; its full sequence is Isoleucine--tRNA ligase (931 aa).

The span at 1–14 shows a compositional bias: polar residues; sequence MDYSKTLNLPQTQF. Positions 1–25 are disordered; that stretch reads MDYSKTLNLPQTQFPMRGNLPQREP. Positions 57–67 match the 'HIGH' region motif; sequence PYANGHIHLGH. Residue E559 coordinates L-isoleucyl-5'-AMP. The 'KMSKS' region motif lies at 600–604; sequence KMSKS. Position 603 (K603) interacts with ATP. Positions 898, 901, 918, and 921 each coordinate Zn(2+).

Belongs to the class-I aminoacyl-tRNA synthetase family. IleS type 1 subfamily. As to quaternary structure, monomer. Zn(2+) is required as a cofactor.

The protein resides in the cytoplasm. It catalyses the reaction tRNA(Ile) + L-isoleucine + ATP = L-isoleucyl-tRNA(Ile) + AMP + diphosphate. Its function is as follows. Catalyzes the attachment of isoleucine to tRNA(Ile). As IleRS can inadvertently accommodate and process structurally similar amino acids such as valine, to avoid such errors it has two additional distinct tRNA(Ile)-dependent editing activities. One activity is designated as 'pretransfer' editing and involves the hydrolysis of activated Val-AMP. The other activity is designated 'posttransfer' editing and involves deacylation of mischarged Val-tRNA(Ile). This is Isoleucine--tRNA ligase from Desulforamulus reducens (strain ATCC BAA-1160 / DSM 100696 / MI-1) (Desulfotomaculum reducens).